We begin with the raw amino-acid sequence, 330 residues long: Phenylalanine--tRNA ligase alpha subunit (330 aa).

Glu-257 lines the Mg(2+) pocket.

This sequence belongs to the class-II aminoacyl-tRNA synthetase family. Phe-tRNA synthetase alpha subunit type 1 subfamily. Tetramer of two alpha and two beta subunits. The cofactor is Mg(2+).

It is found in the cytoplasm. It catalyses the reaction tRNA(Phe) + L-phenylalanine + ATP = L-phenylalanyl-tRNA(Phe) + AMP + diphosphate + H(+). The protein is Phenylalanine--tRNA ligase alpha subunit of Acaryochloris marina (strain MBIC 11017).